We begin with the raw amino-acid sequence, 380 residues long: Mitogen-activated protein kinase 3 (380 aa).

Ala2 carries the N-acetylalanine modification. The Protein kinase domain occupies Tyr43–Leu331. ATP-binding positions include Ile49–Val57 and Lys72. Asp167 functions as the Proton acceptor in the catalytic mechanism. A Phosphothreonine modification is found at Thr199. At Thr203 the chain carries Phosphothreonine; by MAP2K1 and MAP2K2. The TXY motif lies at Thr203 to Tyr205. Tyr205 is modified (phosphotyrosine; by MAP2K1 and MAP2K2). The residue at position 208 (Thr208) is a Phosphothreonine; by autocatalysis.

The protein belongs to the protein kinase superfamily. CMGC Ser/Thr protein kinase family. MAP kinase subfamily. As to quaternary structure, binds both upstream activators and downstream substrates in multimolecular complexes. Found in a complex with at least BRAF, HRAS, MAP2K1/MEK1, MAPK3 and RGS14. Interacts with ADAM15, ARRB2, CANX, DAPK1 (via death domain), HSF4, IER3, MAP2K1/MEK1, MORG1, NISCH, PEA15, SGK1 and MKNK2. MKNK2 isoform 1 binding prevents from dephosphorylation and inactivation. Interacts with TPR. Interacts with HSF1 (via D domain and preferentially with hyperphosphorylated form); this interaction occurs upon heat shock. Interacts with CDKN2AIP. Interacts with CAVIN4. Interacts with GIT1; this interaction is necessary for MAPK3 localization to focal adhesions. Interacts with ZNF263. Interacts with EBF4. Mg(2+) serves as cofactor. Phosphorylated upon FLT3 and KIT signaling. Ligand-activated ALK induces tyrosine phosphorylation. Dephosphorylated by PTPRJ at Tyr-205. Dually phosphorylated on Thr-203 and Tyr-205, which activates the enzyme. In terms of processing, ubiquitinated by TRIM15 via 'Lys-63'-linked ubiquitination; leading to activation. Deubiquitinated by CYLD. In terms of tissue distribution, highest levels within the nervous system, expressed in different tissues, mostly in intestine, placenta and lung.

It is found in the cytoplasm. The protein localises to the nucleus. Its subcellular location is the membrane. It localises to the caveola. The protein resides in the cell junction. It is found in the focal adhesion. It catalyses the reaction L-seryl-[protein] + ATP = O-phospho-L-seryl-[protein] + ADP + H(+). It carries out the reaction L-threonyl-[protein] + ATP = O-phospho-L-threonyl-[protein] + ADP + H(+). Phosphorylated by MAP2K1/MEK1 and MAP2K2/MEK2 on Thr-203 and Tyr-205 in response to external stimuli like insulin or NGF. Both phosphorylations are required for activity. This phosphorylation causes dramatic conformational changes, which enable full activation and interaction of MAPK1/ERK2 with its substrates. Dephosphorylated and inactivated by DUSP3, DUSP6 and DUSP9. In terms of biological role, serine/threonine kinase which acts as an essential component of the MAP kinase signal transduction pathway. MAPK1/ERK2 and MAPK3/ERK1 are the 2 MAPKs which play an important role in the MAPK/ERK cascade. They participate also in a signaling cascade initiated by activated KIT and KITLG/SCF. Depending on the cellular context, the MAPK/ERK cascade mediates diverse biological functions such as cell growth, adhesion, survival and differentiation through the regulation of transcription, translation, cytoskeletal rearrangements. The MAPK/ERK cascade also plays a role in initiation and regulation of meiosis, mitosis, and postmitotic functions in differentiated cells by phosphorylating a number of transcription factors. About 160 substrates have already been discovered for ERKs. Many of these substrates are localized in the nucleus, and seem to participate in the regulation of transcription upon stimulation. However, other substrates are found in the cytosol as well as in other cellular organelles, and those are responsible for processes such as translation, mitosis and apoptosis. Moreover, the MAPK/ERK cascade is also involved in the regulation of the endosomal dynamics, including lysosome processing and endosome cycling through the perinuclear recycling compartment (PNRC); as well as in the fragmentation of the Golgi apparatus during mitosis. The substrates include transcription factors (such as ATF2, BCL6, ELK1, ERF, FOS, HSF4 or SPZ1), cytoskeletal elements (such as CANX, CTTN, GJA1, MAP2, MAPT, PXN, SORBS3 or STMN1), regulators of apoptosis (such as BAD, BTG2, CASP9, DAPK1, IER3, MCL1 or PPARG), regulators of translation (such as EIF4EBP1) and a variety of other signaling-related molecules (like ARHGEF2, DEPTOR, FRS2 or GRB10). Protein kinases (such as RAF1, RPS6KA1/RSK1, RPS6KA3/RSK2, RPS6KA2/RSK3, RPS6KA6/RSK4, SYK, MKNK1/MNK1, MKNK2/MNK2, RPS6KA5/MSK1, RPS6KA4/MSK2, MAPKAPK3 or MAPKAPK5) and phosphatases (such as DUSP1, DUSP4, DUSP6 or DUSP16) are other substrates which enable the propagation the MAPK/ERK signal to additional cytosolic and nuclear targets, thereby extending the specificity of the cascade. The sequence is that of Mitogen-activated protein kinase 3 (Mapk3) from Rattus norvegicus (Rat).